Reading from the N-terminus, the 593-residue chain is Numb-related protein 1 (593 aa).

Disordered stretches follow at residues 1-97 (MSAS…WQPD), 235-278 (TAQV…NSRS), 331-375 (LRQG…FGTQ), and 493-581 (MSMS…DPFD). Serine 17 is modified (phosphoserine; by PKC). Residues 27–37 (QNSLVSEQQPS) show a composition bias toward polar residues. Positions 64–74 (RSLRLPKKRRD) are enriched in basic residues. At serine 65 the chain carries Phosphoserine; by PKC. Positions 102–255 (RTGTCCFNVK…STSSTPPKDI (154 aa)) constitute a PID domain. 3 stretches are compositionally biased toward polar residues: residues 236–251 (AQVN…SSTP), 261–278 (EDNT…NSRS), and 354–364 (SLRTVSNNPTE). Over residues 493–511 (MSMSPTSPSSDPPSTSSYS) the composition is skewed to low complexity. A compositionally biased stretch (pro residues) spans 516 to 528 (SGPPPAHAPPPLP). Positions 532-565 (AVSNGSPSIYQQQLQQANSTRNSPAGINWNSSPN) are enriched in polar residues.

In terms of assembly, interacts with pkc-3. Expressed in cells comprising the intestine, pharyngeal cells, the anal sphincter and depressor muscles.

The protein localises to the cytoplasm. It localises to the cell cortex. The protein resides in the cytoskeleton. It is found in the membrane. Functionally, involved in the tethering and targeting of pkc-3 to modulate the intracellular distribution of the kinase. The complex formed with pkc-3 complexes are likely to be involved in assembly, maintenance, and/or regulation of protein complexes that execute asymmetric and/or polarized cell functions. This chain is Numb-related protein 1, found in Caenorhabditis elegans.